The chain runs to 54 residues: UPF0391 membrane protein msr3702 (54 aa).

A run of 2 helical transmembrane segments spans residues 4–24 (WALV…GGIA) and 30–50 (IAQI…LAGL).

This sequence belongs to the UPF0391 family.

The protein localises to the cell membrane. The chain is UPF0391 membrane protein msr3702 from Mesorhizobium japonicum (strain LMG 29417 / CECT 9101 / MAFF 303099) (Mesorhizobium loti (strain MAFF 303099)).